The following is a 158-amino-acid chain: Endoribonuclease YbeY (158 aa).

3 residues coordinate Zn(2+): His121, His125, and His131.

The protein belongs to the endoribonuclease YbeY family. Zn(2+) serves as cofactor.

The protein localises to the cytoplasm. In terms of biological role, single strand-specific metallo-endoribonuclease involved in late-stage 70S ribosome quality control and in maturation of the 3' terminus of the 16S rRNA. In Exiguobacterium sibiricum (strain DSM 17290 / CCUG 55495 / CIP 109462 / JCM 13490 / 255-15), this protein is Endoribonuclease YbeY.